A 418-amino-acid polypeptide reads, in one-letter code: Gamma-glutamyl phosphate reductase (418 aa).

It belongs to the gamma-glutamyl phosphate reductase family.

Its subcellular location is the cytoplasm. It catalyses the reaction L-glutamate 5-semialdehyde + phosphate + NADP(+) = L-glutamyl 5-phosphate + NADPH + H(+). The protein operates within amino-acid biosynthesis; L-proline biosynthesis; L-glutamate 5-semialdehyde from L-glutamate: step 2/2. In terms of biological role, catalyzes the NADPH-dependent reduction of L-glutamate 5-phosphate into L-glutamate 5-semialdehyde and phosphate. The product spontaneously undergoes cyclization to form 1-pyrroline-5-carboxylate. The polypeptide is Gamma-glutamyl phosphate reductase (Dechloromonas aromatica (strain RCB)).